Here is a 344-residue protein sequence, read N- to C-terminus: Krueppel-like factor 3 (344 aa).

The interval 1–74 (MLMFDPVPVK…TVNKRGSPPA (74 aa)) is repressor domain. A Glycyl lysine isopeptide (Lys-Gly) (interchain with G-Cter in SUMO) cross-link involves residue Lys-10. The 9aaTAD; inactive motif lies at 60–68 (EPVDLTVNK). A CTBP-binding motif motif is present at residues 61–65 (PVDLT). The segment at 66 to 111 (VNKRGSPPAAGGSPSSLKFPSHRRASPGLSMPSSSPPIKKYSPPSP) is disordered. Lys-68 participates in a covalent cross-link: Glycyl lysine isopeptide (Lys-Gly) (interchain with G-Cter in SUMO2). Composition is skewed to low complexity over residues 70–81 (GSPPAAGGSPSS) and 91–107 (SPGL…KKYS). Phosphoserine is present on residues Ser-71, Ser-91, Ser-100, Ser-107, and Ser-110. A Glycyl lysine isopeptide (Lys-Gly) (interchain with G-Cter in SUMO2) cross-link involves residue Lys-195. A Glycyl lysine isopeptide (Lys-Gly) (interchain with G-Cter in SUMO); alternate cross-link involves residue Lys-197. A Glycyl lysine isopeptide (Lys-Gly) (interchain with G-Cter in SUMO2); alternate cross-link involves residue Lys-197. A phosphoserine mark is found at Ser-215, Ser-223, and Ser-249. The interval 235–254 (SVIVQPGKRPLPVESPDTQR) is disordered. 3 C2H2-type zinc fingers span residues 259-283 (HRCD…RRTH), 289-313 (YKCT…FRKH), and 319-341 (FQCP…RKRH).

The protein belongs to the krueppel C2H2-type zinc-finger protein family. As to quaternary structure, monomer. Sumoylated with SUMO1. Sumoylation is enhanced by PIAS1, PIAS2alpha and PIAS2beta, and PIAS4, but not by Pc2. Enhances transcriptional repression, but has no effect on DNA binding. Sumoylation on Lys-197 is the major site. As to expression, in 8.5 day embryos, expressed in midbrain, anterior hindbrain and ventral forebrain. In 9 day embryos, expressed throughout ventral anterior half of embryo including midbrain-hindbrain junction, ventral midbrain, diencephalon and forebrain. At 10.5 days, distribution is more widespread with expression also found in developing limb buds. Widely expressed in the adult.

The protein localises to the nucleus. Its function is as follows. Binds to the CACCC box of erythroid cell-expressed genes. May play a role in hematopoiesis. The polypeptide is Krueppel-like factor 3 (Klf3) (Mus musculus (Mouse)).